The sequence spans 297 residues: uncharacterized protein (297 aa).

The next 5 membrane-spanning stretches (helical) occupy residues 114–136, 150–170, 197–217, 227–247, and 269–289; these read YNRW…LSSG, LLYD…VFNV, MPIV…GVHL, AFTV…KAMI, and FINT…PGLL.

Belongs to the ThrE exporter (TC 2.A.79) family.

It localises to the cell inner membrane. This is an uncharacterized protein from Haemophilus influenzae (strain ATCC 51907 / DSM 11121 / KW20 / Rd).